The sequence spans 390 residues: Monomeric sarcosine oxidase (390 aa).

6 to 36 (DVIVVGAGSMGMAAGYQLAKQGVKTLLVDAF) contributes to the FAD binding site. Cys-316 bears the S-8alpha-FAD cysteine mark.

In terms of assembly, monomer. FAD is required as a cofactor.

The protein resides in the cytoplasm. The enzyme catalyses sarcosine + O2 + H2O = formaldehyde + glycine + H2O2. With respect to regulation, pyrrole-2-carboxylate is a competitive inhibitor. N-(cyclopropyl)glycine (CPG) is a mechanism-based inhibitor and inactivates the enzyme by covalently modifying the flavin. In terms of biological role, catalyzes the oxidative demethylation of sarcosine. Can also oxidize other secondary amino acids such as N-methyl-L-alanine. The protein is Monomeric sarcosine oxidase (soxA) of Bacillus sp. (strain B-0618).